We begin with the raw amino-acid sequence, 411 residues long: MPSVLWILFDGGGDRPAGGKTPFHAAFKPTIDYLTANGSCGILDPIAPGVRPGSDTAHLALFGYDPFKYYTGRGAFEALGADVALKPGDVAFRTNLATVDENGVVIDRRAGRYIAPEEAKAVEDLMKKIGEEVGRKYGVEVVYKSTVEHRGVLVLRGAVSHRVSDTDPHKVGAKMARAEPLENSKEAALTAEVVNELSRRFTEAAAGLEINKARRLQGRLPINAILLRGGGYMPQIEPIRERYNIRAAAIAGVALIRGVARAVGMDVYTAKGLGGTKDDVFDEAVKLAVELMSRYDVVFLHVKGTDSTSHDGDFNGKVSVIERLDKALAPYLDALLKNYVVVTSDHATPVGVREHTGEPVPVMLYGPDVVVDDVAKFSELTCWRGALGRIRGIDIIPILGSYLGLSEKFGE.

The protein belongs to the BPG-independent phosphoglycerate mutase family. A-PGAM subfamily.

It carries out the reaction (2R)-2-phosphoglycerate = (2R)-3-phosphoglycerate. Its pathway is carbohydrate degradation; glycolysis; pyruvate from D-glyceraldehyde 3-phosphate: step 3/5. Catalyzes the interconversion of 2-phosphoglycerate and 3-phosphoglycerate. The chain is 2,3-bisphosphoglycerate-independent phosphoglycerate mutase from Pyrobaculum arsenaticum (strain DSM 13514 / JCM 11321 / PZ6).